Reading from the N-terminus, the 1819-residue chain is Non-reducing polyketide synthase 8 (1819 aa).

Residues 38-265 form the Starter acyltransferase (SAT) domain; sequence QLTLLSKQKQ…QKIINLPVYG (228 aa). One can recognise a Ketosynthase family 3 (KS3) domain in the interval 405 to 840; the sequence is KSSIAIVGMS…GGNTMIAIEE (436 aa). Catalysis depends on for beta-ketoacyl synthase activity residues cysteine 578, histidine 714, and histidine 758. The region spanning 943-1262 is the Malonyl-CoA:ACP transacylase (MAT) domain; that stretch reads FAFTGQGASY…SLSTLHCAGA (320 aa). The segment at 1336–1476 is N-terminal hotdog fold; that stretch reads QRIIEESFDG…GDRSAWLSSW (141 aa). The PKS/mFAS DH domain maps to 1336 to 1646; that stretch reads QRIIEESFDG…FRQYPRILLN (311 aa). The active-site Proton acceptor; for dehydratase activity is the histidine 1368. The segment at 1404 to 1642 is dehydratase (DH) domain; it reads AMNVADLEVV…GGIKFRQYPR (239 aa). The C-terminal hotdog fold stretch occupies residues 1498 to 1646; the sequence is IANRLSHNMA…FRQYPRILLN (149 aa). The active-site Proton donor; for dehydratase activity is aspartate 1557. One can recognise a Carrier domain in the interval 1741–1818; the sequence is VDTNSVASKA…DLRSWLMEYY (78 aa). The residue at position 1778 (serine 1778) is an O-(pantetheine 4'-phosphoryl)serine.

Pantetheine 4'-phosphate is required as a cofactor.

It functions in the pathway secondary metabolite biosynthesis. Non-reducing polyketide synthase; part of the gene cluster that mediates the biosynthesis of dibenzodioxocinones such as pestalotiollide B, a novel class of inhibitors against cholesterol ester transfer protein (CEPT). The biosynthesis initiates from condensation of acetate and malonate units catalyzed by the non-reducing PKS pks8/GME11356. Pks8/GME11356 lacks a thioesterase (TE) domain, which is important to the cyclizing of the third ring of atrochrysone carboxylic acid, and the esterase GME11355 might play the role of TE and catalyzes the cyclization reaction of the C ring. The lactamase-like protein GME11357 (or other beta-lactamases in Pestalotiopsis microspora) probably hydrolyzes the thioester bond between the ACP of pks8/GME11356 and the intermediate to release atrochrysone carboxylic acid, which is spontaneously dehydrates to form endocrocin anthrone. Endocrocin anthrone is further converted to emodin via the endocrocin intermediate. Emodin is then oxidized by several enzymes such as the Baeyer-Villiger oxidase GME11358, the oxidoreductase GME11367, the short chain dehydrogenase/reductase GME11373, as well as by other oxidoreductases from the cluster, to modify the A and C rings and open the B ring, and finally yield monodictyphenone. The prenyltransferase GME11375 may catalyze the addition reaction between the C5 side chains and the carbon bone of dibenzodioxocinones. The remaining biochemical reactions to the final product dibenzodioxocinones should be methylation catalyzed by methyltransferase GME11366 and reduction and lactonization reaction catalyzed by a series of oxidordeuctases. This chain is Non-reducing polyketide synthase 8, found in Pestalotiopsis microspora.